We begin with the raw amino-acid sequence, 405 residues long: S-arrestin (405 aa).

T234 is modified (phosphothreonine).

This sequence belongs to the arrestin family. Monomer. Homodimer. Homotetramer. Interacts with RHO (via the phosphorylated C-terminus).

It is found in the cell projection. The protein localises to the cilium. It localises to the photoreceptor outer segment. Its subcellular location is the membrane. In terms of biological role, binds to photoactivated, phosphorylated RHO and terminates RHO signaling via G-proteins by competing with G-proteins for the same binding site on RHO. May play a role in preventing light-dependent degeneration of retinal photoreceptor cells. The sequence is that of S-arrestin (SAG) from Canis lupus familiaris (Dog).